Here is a 470-residue protein sequence, read N- to C-terminus: Neuraminidase (470 aa).

Residues 1-6 (MNPNQK) are Intravirion-facing. The helical transmembrane segment at 7–27 (IITIGSICMAIGIISLILQMG) threads the bilayer. An involved in apical transport and lipid raft association region spans residues 11-33 (GSICMAIGIISLILQMGNIISIW). Residues 28-470 (NIISIWVSHS…GAELPFTIDK (443 aa)) lie on the Virion surface side of the membrane. The interval 36–90 (HSIQTGSQNHTGICNQRIITYENSTWVNQTYVNINNTNVVAGKDTTSVTLAGNSS) is hypervariable stalk region. N-linked (GlcNAc...) asparagine; by host glycosylation is found at N44, N58, N63, N70, and N88. The tract at residues 91–470 (LCPIRGWAIY…GAELPFTIDK (380 aa)) is head of neuraminidase. 8 cysteine pairs are disulfide-bonded: C92/C417, C124/C129, C184/C231, C233/C238, C279/C292, C281/C290, C318/C335, and C421/C447. R118 is a binding site for substrate. N146 carries N-linked (GlcNAc...) asparagine; by host glycosylation. D151 functions as the Proton donor/acceptor in the catalytic mechanism. R152 lines the substrate pocket. N-linked (GlcNAc...) asparagine; by host glycosylation occurs at N235. 277-278 (EE) lines the substrate pocket. Position 293 (R293) interacts with substrate. Ca(2+)-binding residues include D294, G298, and D324. N-linked (GlcNAc...) asparagine; by host glycosylation occurs at N365. Residue R368 coordinates substrate. Y402 acts as the Nucleophile in catalysis. N-linked (GlcNAc...) asparagine; by host glycosylation is present at N455.

Belongs to the glycosyl hydrolase 34 family. Homotetramer. The cofactor is Ca(2+). Post-translationally, N-glycosylated.

It is found in the virion membrane. The protein localises to the host apical cell membrane. It carries out the reaction Hydrolysis of alpha-(2-&gt;3)-, alpha-(2-&gt;6)-, alpha-(2-&gt;8)- glycosidic linkages of terminal sialic acid residues in oligosaccharides, glycoproteins, glycolipids, colominic acid and synthetic substrates.. With respect to regulation, inhibited by the neuraminidase inhibitors zanamivir (Relenza) and oseltamivir (Tamiflu). These drugs interfere with the release of progeny virus from infected cells and are effective against all influenza strains. Resistance to neuraminidase inhibitors is quite rare. Catalyzes the removal of terminal sialic acid residues from viral and cellular glycoconjugates. Cleaves off the terminal sialic acids on the glycosylated HA during virus budding to facilitate virus release. Additionally helps virus spread through the circulation by further removing sialic acids from the cell surface. These cleavages prevent self-aggregation and ensure the efficient spread of the progeny virus from cell to cell. Otherwise, infection would be limited to one round of replication. Described as a receptor-destroying enzyme because it cleaves a terminal sialic acid from the cellular receptors. May facilitate viral invasion of the upper airways by cleaving the sialic acid moieties on the mucin of the airway epithelial cells. Likely to plays a role in the budding process through its association with lipid rafts during intracellular transport. May additionally display a raft-association independent effect on budding. Plays a role in the determination of host range restriction on replication and virulence. Sialidase activity in late endosome/lysosome traffic seems to enhance virus replication. The polypeptide is Neuraminidase (Aves (Human)).